A 179-amino-acid chain; its full sequence is Large ribosomal subunit protein uL6 (179 aa).

The protein belongs to the universal ribosomal protein uL6 family. In terms of assembly, part of the 50S ribosomal subunit.

Its function is as follows. This protein binds to the 23S rRNA, and is important in its secondary structure. It is located near the subunit interface in the base of the L7/L12 stalk, and near the tRNA binding site of the peptidyltransferase center. The chain is Large ribosomal subunit protein uL6 from Clostridium perfringens (strain ATCC 13124 / DSM 756 / JCM 1290 / NCIMB 6125 / NCTC 8237 / Type A).